The following is a 286-amino-acid chain: 33 kDa chaperonin (286 aa).

2 disulfides stabilise this stretch: Cys225–Cys227 and Cys258–Cys261.

This sequence belongs to the HSP33 family. Post-translationally, under oxidizing conditions two disulfide bonds are formed involving the reactive cysteines. Under reducing conditions zinc is bound to the reactive cysteines and the protein is inactive.

It localises to the cytoplasm. In terms of biological role, redox regulated molecular chaperone. Protects both thermally unfolding and oxidatively damaged proteins from irreversible aggregation. Plays an important role in the bacterial defense system toward oxidative stress. In Shewanella loihica (strain ATCC BAA-1088 / PV-4), this protein is 33 kDa chaperonin.